Reading from the N-terminus, the 81-residue chain is Cytotoxin I-like P-15 (81 aa).

The first 21 residues, 1–21 (MKTLLLTLAAATIVCLDLGYT), serve as a signal peptide directing secretion. 4 disulfide bridges follow: C24-C42, C35-C59, C63-C74, and C75-C80.

It belongs to the three-finger toxin family. Short-chain subfamily. Type IA cytotoxin sub-subfamily. Monomer in solution; Homodimer and oligomer in the presence of negatively charged lipids forming a pore with a size ranging between 20 and 30 Angstroms. Expressed by the venom gland.

It localises to the secreted. The protein localises to the target cell membrane. Functionally, shows cytolytic activity on many different cells by forming pore in lipid membranes. In vivo, increases heart rate or kills the animal by cardiac arrest. In addition, it binds to heparin with high affinity, interacts with Kv channel-interacting protein 1 (KCNIP1) in a calcium-independent manner, and binds to integrin alpha-V/beta-3 (ITGAV/ITGB3) with moderate affinity. The sequence is that of Cytotoxin I-like P-15 from Naja atra (Chinese cobra).